Here is a 431-residue protein sequence, read N- to C-terminus: Enolase (431 aa).

(2R)-2-phosphoglycerate is bound at residue Gln164. The Proton donor role is filled by Glu206. Mg(2+)-binding residues include Asp243, Glu286, and Asp313. (2R)-2-phosphoglycerate-binding residues include Lys338, Arg367, Ser368, and Lys389. Residue Lys338 is the Proton acceptor of the active site.

It belongs to the enolase family. Mg(2+) serves as cofactor.

The protein localises to the cytoplasm. Its subcellular location is the secreted. It localises to the cell surface. It catalyses the reaction (2R)-2-phosphoglycerate = phosphoenolpyruvate + H2O. The protein operates within carbohydrate degradation; glycolysis; pyruvate from D-glyceraldehyde 3-phosphate: step 4/5. Its function is as follows. Catalyzes the reversible conversion of 2-phosphoglycerate (2-PG) into phosphoenolpyruvate (PEP). It is essential for the degradation of carbohydrates via glycolysis. The chain is Enolase from Chloroflexus aggregans (strain MD-66 / DSM 9485).